The sequence spans 306 residues: Beta-lactamase 1 (306 aa).

The signal sequence occupies residues 1-27 (MILKNKRMLKIGICVGILGLSITSLEA). The active-site Acyl-ester intermediate is the serine 91. Glutamate 187 acts as the Proton acceptor in catalysis. 253–255 (KSG) contacts substrate.

Belongs to the class-A beta-lactamase family.

The catalysed reaction is a beta-lactam + H2O = a substituted beta-amino acid. Functionally, this protein is a beta-lactamase with a substrate specificity for penicillins. The protein is Beta-lactamase 1 (blaY) of Bacillus cereus.